The chain runs to 474 residues: Probable threonine--tRNA ligase, mitochondrial (474 aa).

A mitochondrion-targeting transit peptide spans 1–27; sequence MMKLKKFQLHTPFAHSCNRVEIYTARF.

The protein belongs to the class-II aminoacyl-tRNA synthetase family.

The protein localises to the mitochondrion matrix. The enzyme catalyses tRNA(Thr) + L-threonine + ATP = L-threonyl-tRNA(Thr) + AMP + diphosphate + H(+). The chain is Probable threonine--tRNA ligase, mitochondrial from Schizosaccharomyces pombe (strain 972 / ATCC 24843) (Fission yeast).